Reading from the N-terminus, the 264-residue chain is Undecaprenyl-diphosphatase (264 aa).

The next 7 helical transmembrane spans lie at arginine 38–phenylalanine 58, arginine 75–valine 95, valine 106–tyrosine 126, valine 136–glycine 156, phenylalanine 181–methionine 201, valine 217–isoleucine 237, and phenylalanine 242–serine 262.

The protein belongs to the UppP family.

It localises to the cell inner membrane. It catalyses the reaction di-trans,octa-cis-undecaprenyl diphosphate + H2O = di-trans,octa-cis-undecaprenyl phosphate + phosphate + H(+). Its function is as follows. Catalyzes the dephosphorylation of undecaprenyl diphosphate (UPP). Confers resistance to bacitracin. This is Undecaprenyl-diphosphatase from Stenotrophomonas maltophilia (strain R551-3).